A 1024-amino-acid polypeptide reads, in one-letter code: Beta-galactosidase (1024 aa).

Substrate is bound by residues Asn103 and Asp202. Asp202 contacts Na(+). Mg(2+)-binding residues include Glu417, His419, and Glu462. Residues Glu462 and 538–541 (EYAH) each bind substrate. Glu462 serves as the catalytic Proton donor. Catalysis depends on Glu538, which acts as the Nucleophile. Asn598 contacts Mg(2+). 2 residues coordinate Na(+): Phe602 and Asn605. Positions 605 and 1000 each coordinate substrate.

It belongs to the glycosyl hydrolase 2 family. Homotetramer. It depends on Mg(2+) as a cofactor. Requires Na(+) as cofactor.

The enzyme catalyses Hydrolysis of terminal non-reducing beta-D-galactose residues in beta-D-galactosides.. The polypeptide is Beta-galactosidase (Shigella dysenteriae serotype 1 (strain Sd197)).